Consider the following 263-residue polypeptide: uncharacterized protein (263 aa).

This sequence belongs to the AtsA family.

The protein localises to the plastid. The protein resides in the chloroplast. This is an uncharacterized protein from Pyropia yezoensis (Susabi-nori).